We begin with the raw amino-acid sequence, 974 residues long: Phosphoenolpyruvate carboxylase 1 (974 aa).

Residues His-164 and Lys-604 contribute to the active site.

Belongs to the PEPCase type 1 family. In terms of assembly, exists as a homotetramer or heterooligomer. The cofactor is Mg(2+).

The protein localises to the cytoplasm. The catalysed reaction is oxaloacetate + phosphate = phosphoenolpyruvate + hydrogencarbonate. Its activity is regulated as follows. Activated by glutamine and dihydroxyacetone phosphate. Inhibited by glutamate, aspartate, 2-oxoglutarate and malate. Through the carboxylation of phosphoenolpyruvate (PEP) it forms oxaloacetate, a four-carbon dicarboxylic acid source for the tricarboxylic acid cycle. The sequence is that of Phosphoenolpyruvate carboxylase 1 from Chlamydomonas reinhardtii (Chlamydomonas smithii).